A 121-amino-acid polypeptide reads, in one-letter code: Large ribosomal subunit protein bL12 (121 aa).

This sequence belongs to the bacterial ribosomal protein bL12 family. In terms of assembly, homodimer. Part of the ribosomal stalk of the 50S ribosomal subunit. Forms a multimeric L10(L12)X complex, where L10 forms an elongated spine to which 2 to 4 L12 dimers bind in a sequential fashion. Binds GTP-bound translation factors.

In terms of biological role, forms part of the ribosomal stalk which helps the ribosome interact with GTP-bound translation factors. Is thus essential for accurate translation. This chain is Large ribosomal subunit protein bL12, found in Tremblaya princeps.